The chain runs to 379 residues: Pectin lyase A (379 aa).

The signal sequence occupies residues 1 to 20 (MKYSTIFSAAAAVFAGSAAA). 2 disulfide bridges follow: Cys83-Cys102 and Cys92-Cys226. An O-linked (Man) threonine glycan is attached at Thr88. Asn129 carries an N-linked (GlcNAc...) asparagine glycan. Arg256 is a catalytic residue. Cys322 and Cys330 are joined by a disulfide. The O-linked (Man) serine; in strain 4M-147 glycan is linked to Ser368.

Belongs to the polysaccharide lyase 1 family. Post-translationally, N-glycosylated at Asn-129 and O-glycosylated at Thr-88 when expressed in Aspergillus nidulans. The protein from strain 4M-147 is O-glycosylated at Thr-88 and Ser-368. PubMed:9195887 modeled GalNAc at the O-glycosylation site, a glycosylation not observed in fungi. The O-linked saccharide is probably mannose.

It localises to the secreted. The enzyme catalyses Eliminative cleavage of (1-&gt;4)-alpha-D-galacturonan methyl ester to give oligosaccharides with 4-deoxy-6-O-methyl-alpha-D-galact-4-enuronosyl groups at their non-reducing ends.. In terms of biological role, pectinolytic enzymes consist of four classes of enzymes: pectin lyase, polygalacturonase, pectin methylesterase and rhamnogalacturonase. Among pectinolytic enzymes, pectin lyase is the most important in depolymerization of pectin, since it cleaves internal glycosidic bonds of highly methylated pectins. This Aspergillus niger protein is Pectin lyase A (pelA).